Here is a 1107-residue protein sequence, read N- to C-terminus: Enolase-phosphatase E1 (1107 aa).

The Mg(2+) site is built by D19 and E21. Residues 152 to 153 (SS) and K186 contribute to the substrate site. Mg(2+) is bound at residue D211. The interval 258–1107 (SVKSTETENG…SATPSVETES (850 aa)) is disordered. Over residues 260-289 (KSTETENGAEKETVTESTEKVADESEKETE) the composition is skewed to basic and acidic residues. Residues 291-306 (ETAAAETENGAEAENG) show a composition bias toward low complexity. Residues 366 to 376 (DAMDVDAEMTD) are compositionally biased toward acidic residues. Basic and acidic residues-rich tracts occupy residues 393–427 (VTEK…DTKQ) and 435–462 (GEDK…KEEE). The segment covering 475–485 (DKMDVDEEDSA) has biased composition (acidic residues). 6 stretches are compositionally biased toward basic and acidic residues: residues 486–512 (VIEK…KEEN), 534–548 (DETK…KEES), 572–586 (TVEK…SKSE), 593–604 (TSEKKVEDKSAN), 610–686 (KEPK…EVKA), and 693–776 (DESK…KSVD). A compositionally biased stretch (low complexity) spans 794 to 803 (EETSATTEAQ). Composition is skewed to basic and acidic residues over residues 804 to 838 (ATKE…DAKS) and 849 to 908 (KEMK…ETKG). A compositionally biased stretch (low complexity) spans 909-919 (VEATTAGPVEE). A compositionally biased stretch (acidic residues) spans 920 to 935 (VAVEATEEDVAMEAES). Basic and acidic residues-rich tracts occupy residues 937 to 957 (DAVK…KLDS), 1001 to 1028 (DEVK…EADS), and 1035 to 1047 (NHDE…KEND). The span at 1048-1083 (TSASNIEEASSATTTTTNGTSTESDSSSTTPSSETV) shows a compositional bias: low complexity.

This sequence belongs to the HAD-like hydrolase superfamily. MasA/MtnC family. As to quaternary structure, monomer. Mg(2+) serves as cofactor.

Its subcellular location is the cytoplasm. It localises to the nucleus. The catalysed reaction is 5-methylsulfanyl-2,3-dioxopentyl phosphate + H2O = 1,2-dihydroxy-5-(methylsulfanyl)pent-1-en-3-one + phosphate. It functions in the pathway amino-acid biosynthesis; L-methionine biosynthesis via salvage pathway; L-methionine from S-methyl-5-thio-alpha-D-ribose 1-phosphate: step 3/6. The protein operates within amino-acid biosynthesis; L-methionine biosynthesis via salvage pathway; L-methionine from S-methyl-5-thio-alpha-D-ribose 1-phosphate: step 4/6. In terms of biological role, bifunctional enzyme that catalyzes the enolization of 2,3-diketo-5-methylthiopentyl-1-phosphate (DK-MTP-1-P) into the intermediate 2-hydroxy-3-keto-5-methylthiopentenyl-1-phosphate (HK-MTPenyl-1-P), which is then dephosphorylated to form the acireductone 1,2-dihydroxy-3-keto-5-methylthiopentene (DHK-MTPene). This is Enolase-phosphatase E1 from Aedes aegypti (Yellowfever mosquito).